The following is a 247-amino-acid chain: Probable phosphatase swp_1620 (247 aa).

Positions 8, 10, 16, 41, 74, 102, 132, 193, and 195 each coordinate Zn(2+).

This sequence belongs to the PHP family. Requires Zn(2+) as cofactor.

The protein is Probable phosphatase swp_1620 of Shewanella piezotolerans (strain WP3 / JCM 13877).